The chain runs to 328 residues: GTPase Obg (328 aa).

One can recognise an Obg domain in the interval 1–159; that stretch reads MNFIDEVKIY…MWVQLSLKLL (159 aa). The OBG-type G domain occupies 160–327; the sequence is SDVGLVGLPN…IIKLALQTIK (168 aa). GTP contacts are provided by residues 166–173, 191–195, 212–215, 279–282, and 308–310; these read GLPNAGKS, FTTLV, DIPG, NKID, and STY. Mg(2+) is bound by residues S173 and T193.

It belongs to the TRAFAC class OBG-HflX-like GTPase superfamily. OBG GTPase family. Monomer. It depends on Mg(2+) as a cofactor.

It localises to the cytoplasm. Its function is as follows. An essential GTPase which binds GTP, GDP and possibly (p)ppGpp with moderate affinity, with high nucleotide exchange rates and a fairly low GTP hydrolysis rate. Plays a role in control of the cell cycle, stress response, ribosome biogenesis and in those bacteria that undergo differentiation, in morphogenesis control. This Rickettsia bellii (strain RML369-C) protein is GTPase Obg.